Consider the following 166-residue polypeptide: Protein UL5 (166 aa).

As to quaternary structure, interacts with host IQGAP1.

The protein localises to the host cytoplasm. May play a role in rearrangement of cellular cytoskeleton towards an efficient viral assembly and spreading. This is Protein UL5 (UL5) from Human cytomegalovirus (strain Merlin) (HHV-5).